A 138-amino-acid chain; its full sequence is MSTIVRKLISTANAAKPVAPYNQAVVADRTVYVSGCLGLDKDTMKLVPGGPTEQAQKALENLEAVLKAADSGVDKVIKNTVFLKDLNDFGAVNEVYKRVFNKDFPARSCFQVAKLPMDALVEIECIALTGSVETKTVQ.

The protein belongs to the RutC family.

In terms of biological role, molecular chaperone. Seems to fulfill an ATP-independent, HSP70-like function in protein folding. May protect essential factors of cell proliferation during heat shock. No role in calpain activation. This chain is RutC family protein UK114, found in Drosophila melanogaster (Fruit fly).